We begin with the raw amino-acid sequence, 482 residues long: Reduced viability upon starvation protein 167 (482 aa).

S2 is modified (N-acetylserine). A BAR domain is found at 17 to 254 (FRQKFKMGEQ…YFDLNSDIVE (238 aa)). Coiled coils occupy residues 31-64 (VYED…NGML) and 174-204 (AKDE…LKTQ). A Glycyl lysine isopeptide (Lys-Gly) (interchain with G-Cter in ubiquitin) cross-link involves residue K242. S299, S321, and S379 each carry phosphoserine; by FUS3 and PHO85. A disordered region spans residues 382–407 (LTGLGFQQSPQQQQGPPPAYSNPLTS). The region spanning 421-482 (PGVETVTALY…PGNYVQLNKN (62 aa)) is the SH3 domain. K481 participates in a covalent cross-link: Glycyl lysine isopeptide (Lys-Gly) (interchain with G-Cter in ubiquitin).

In terms of assembly, binds to actin. Interacts with ABP1, GYL1, GYP5, PCL2 and YBR108W. Post-translationally, phosphorylated redundantly by cyclin-dependent kinase PHO85 in association with PCL1,2-type cyclins or by MAP kinase FUS3. Phosphorylation inhibits interaction with complexes involved in actin cytoskeleton function.

Its subcellular location is the cytoplasm. The protein localises to the cytoskeleton. Component of a cytoskeletal structure that is required for the formation of endocytic vesicles at the plasma membrane level. Could be implicated in cytoskeletal reorganization in response to environmental stresses and could act in the budding site selection mechanism. The sequence is that of Reduced viability upon starvation protein 167 (RVS167) from Saccharomyces cerevisiae (strain ATCC 204508 / S288c) (Baker's yeast).